Reading from the N-terminus, the 88-residue chain is Large ribosomal subunit protein bL31B (88 aa).

Belongs to the bacterial ribosomal protein bL31 family. Type B subfamily. Part of the 50S ribosomal subunit.

The protein is Large ribosomal subunit protein bL31B of Herminiimonas arsenicoxydans.